The chain runs to 109 residues: Iron-sulfur cluster assembly protein CyaY (109 aa).

Belongs to the frataxin family.

Involved in iron-sulfur (Fe-S) cluster assembly. May act as a regulator of Fe-S biogenesis. The protein is Iron-sulfur cluster assembly protein CyaY of Albidiferax ferrireducens (strain ATCC BAA-621 / DSM 15236 / T118) (Rhodoferax ferrireducens).